The chain runs to 65 residues: Large ribosomal subunit protein uL30 (65 aa).

It belongs to the universal ribosomal protein uL30 family. As to quaternary structure, part of the 50S ribosomal subunit.

The protein is Large ribosomal subunit protein uL30 of Aster yellows witches'-broom phytoplasma (strain AYWB).